The sequence spans 156 residues: ATP synthase subunit b (156 aa).

Residues 7-29 (LLGQAISFAMFVWFCMKYVWPPI) traverse the membrane as a helical segment.

Belongs to the ATPase B chain family. As to quaternary structure, F-type ATPases have 2 components, F(1) - the catalytic core - and F(0) - the membrane proton channel. F(1) has five subunits: alpha(3), beta(3), gamma(1), delta(1), epsilon(1). F(0) has three main subunits: a(1), b(2) and c(10-14). The alpha and beta chains form an alternating ring which encloses part of the gamma chain. F(1) is attached to F(0) by a central stalk formed by the gamma and epsilon chains, while a peripheral stalk is formed by the delta and b chains.

The protein resides in the cell inner membrane. F(1)F(0) ATP synthase produces ATP from ADP in the presence of a proton or sodium gradient. F-type ATPases consist of two structural domains, F(1) containing the extramembraneous catalytic core and F(0) containing the membrane proton channel, linked together by a central stalk and a peripheral stalk. During catalysis, ATP synthesis in the catalytic domain of F(1) is coupled via a rotary mechanism of the central stalk subunits to proton translocation. Its function is as follows. Component of the F(0) channel, it forms part of the peripheral stalk, linking F(1) to F(0). This chain is ATP synthase subunit b, found in Vibrio vulnificus (strain CMCP6).